Reading from the N-terminus, the 284-residue chain is D-tagatose-1,6-bisphosphate aldolase subunit GatY (284 aa).

Aspartate 82 (proton donor) is an active-site residue. Zn(2+) is bound by residues histidine 83 and histidine 180. Glycine 181 contacts dihydroxyacetone phosphate. Histidine 208 contacts Zn(2+). Dihydroxyacetone phosphate-binding positions include 209 to 211 (GAS) and 230 to 233 (NVAT).

Belongs to the class II fructose-bisphosphate aldolase family. TagBP aldolase GatY subfamily. As to quaternary structure, forms a complex with GatZ. Zn(2+) is required as a cofactor.

The catalysed reaction is D-tagatofuranose 1,6-bisphosphate = D-glyceraldehyde 3-phosphate + dihydroxyacetone phosphate. It functions in the pathway carbohydrate metabolism; D-tagatose 6-phosphate degradation; D-glyceraldehyde 3-phosphate and glycerone phosphate from D-tagatose 6-phosphate: step 2/2. In terms of biological role, catalytic subunit of the tagatose-1,6-bisphosphate aldolase GatYZ, which catalyzes the reversible aldol condensation of dihydroxyacetone phosphate (DHAP or glycerone-phosphate) with glyceraldehyde 3-phosphate (G3P) to produce tagatose 1,6-bisphosphate (TBP). Requires GatZ subunit for full activity and stability. Is involved in the catabolism of galactitol. This chain is D-tagatose-1,6-bisphosphate aldolase subunit GatY, found in Escherichia coli O6:K15:H31 (strain 536 / UPEC).